The primary structure comprises 602 residues: Elongation factor 4 (602 aa).

The region spanning 7-188 (ENIRNFSIIA…SIIRLVPPPK (182 aa)) is the tr-type G domain. GTP-binding positions include 19–24 (DHGKST) and 135–138 (NKID).

It belongs to the TRAFAC class translation factor GTPase superfamily. Classic translation factor GTPase family. LepA subfamily.

The protein localises to the cell inner membrane. The enzyme catalyses GTP + H2O = GDP + phosphate + H(+). Required for accurate and efficient protein synthesis under certain stress conditions. May act as a fidelity factor of the translation reaction, by catalyzing a one-codon backward translocation of tRNAs on improperly translocated ribosomes. Back-translocation proceeds from a post-translocation (POST) complex to a pre-translocation (PRE) complex, thus giving elongation factor G a second chance to translocate the tRNAs correctly. Binds to ribosomes in a GTP-dependent manner. The polypeptide is Elongation factor 4 (Chlamydia trachomatis serovar L2 (strain ATCC VR-902B / DSM 19102 / 434/Bu)).